A 332-amino-acid polypeptide reads, in one-letter code: 5-dehydro-2-deoxygluconokinase (332 aa).

It belongs to the carbohydrate kinase PfkB family.

It carries out the reaction 5-dehydro-2-deoxy-D-gluconate + ATP = 6-phospho-5-dehydro-2-deoxy-D-gluconate + ADP + H(+). It functions in the pathway polyol metabolism; myo-inositol degradation into acetyl-CoA; acetyl-CoA from myo-inositol: step 5/7. Catalyzes the phosphorylation of 5-dehydro-2-deoxy-D-gluconate (2-deoxy-5-keto-D-gluconate or DKG) to 6-phospho-5-dehydro-2-deoxy-D-gluconate (DKGP). The polypeptide is 5-dehydro-2-deoxygluconokinase (Bacillus anthracis (strain A0248)).